Here is a 432-residue protein sequence, read N- to C-terminus: 5-hydroxybenzimidazole synthase BzaA (432 aa).

Residues Met95, Tyr124, His163, 185 to 187, and 226 to 229 contribute to the substrate site; these read SYG and DGMR. His269 contacts Zn(2+). A substrate-binding site is contributed by Phe292. Zn(2+) is bound at residue His333. [4Fe-4S] cluster contacts are provided by Cys409, Cys412, and Cys416.

This sequence belongs to the ThiC family. 5-hydroxybenzimidazole synthase subfamily. [4Fe-4S] cluster serves as cofactor.

It catalyses the reaction 5-amino-1-(5-phospho-beta-D-ribosyl)imidazole + AH2 + S-adenosyl-L-methionine = 5-hydroxybenzimidazole + 5'-deoxyadenosine + formate + L-methionine + A + NH4(+) + phosphate + 2 H(+). In terms of biological role, together with BzaB, probably catalyzes the conversion of aminoimidazole ribotide (AIR) to 5-hydroxybenzimidazole (5-HBI) in a radical S-adenosyl-L-methionine (SAM)-dependent reaction. Is thus involved in the anaerobic biosynthesis of the benzimidazole lower axial ligand of the cobamide produced by M.thermoacetica. Requires BzaB for catalytic activity, as BzaA alone displays no activity. In Moorella thermoacetica (strain ATCC 39073 / JCM 9320), this protein is 5-hydroxybenzimidazole synthase BzaA.